Here is a 234-residue protein sequence, read N- to C-terminus: MEKKDMLYEGKAKKIFGTDDKDTVVVYYKDDATAFNGEKKGTIEDKGVMNNSITSMLFELLEKKGVKTHFIEKINEREQLCKKVEIVPLEVIVRNIAAGSMAKRLGLSEGRKLDTTVFEISYKNDDLNDPLINDYHAVAIGLTTFEELKEMYSIAEKVNNTLKEFFDKQGIILVDFKIEIGRSRGGLLLADEISPDTCRLWDKKTGEKLDKDRFRRDMGNVKEAYMEILKRVNK.

This sequence belongs to the SAICAR synthetase family.

It carries out the reaction 5-amino-1-(5-phospho-D-ribosyl)imidazole-4-carboxylate + L-aspartate + ATP = (2S)-2-[5-amino-1-(5-phospho-beta-D-ribosyl)imidazole-4-carboxamido]succinate + ADP + phosphate + 2 H(+). Its pathway is purine metabolism; IMP biosynthesis via de novo pathway; 5-amino-1-(5-phospho-D-ribosyl)imidazole-4-carboxamide from 5-amino-1-(5-phospho-D-ribosyl)imidazole-4-carboxylate: step 1/2. This Clostridium botulinum (strain Loch Maree / Type A3) protein is Phosphoribosylaminoimidazole-succinocarboxamide synthase.